Here is a 414-residue protein sequence, read N- to C-terminus: ORC1-type DNA replication protein 11 (414 aa).

Residues 60–64, Tyr207, and Arg219 contribute to the ATP site; that span reads VGKTA.

Belongs to the CDC6/cdc18 family.

Functionally, involved in regulation of DNA replication. In Haloarcula marismortui (strain ATCC 43049 / DSM 3752 / JCM 8966 / VKM B-1809) (Halobacterium marismortui), this protein is ORC1-type DNA replication protein 11 (cdc6k).